The sequence spans 583 residues: Aspartate--tRNA ligase (583 aa).

Glu174 contacts L-aspartate. An aspartate region spans residues Gln198–Lys201. Position 220 (Arg220) interacts with L-aspartate. Residues Arg220–Glu222 and Gln229 contribute to the ATP site. Residue His443 coordinates L-aspartate. Glu477 is a binding site for ATP. Arg484 is an L-aspartate binding site. Gly529–Arg532 contacts ATP.

This sequence belongs to the class-II aminoacyl-tRNA synthetase family. Type 1 subfamily. Homodimer.

It is found in the cytoplasm. It carries out the reaction tRNA(Asp) + L-aspartate + ATP = L-aspartyl-tRNA(Asp) + AMP + diphosphate. In terms of biological role, catalyzes the attachment of L-aspartate to tRNA(Asp) in a two-step reaction: L-aspartate is first activated by ATP to form Asp-AMP and then transferred to the acceptor end of tRNA(Asp). This Streptococcus agalactiae serotype III (strain NEM316) protein is Aspartate--tRNA ligase.